A 1003-amino-acid polypeptide reads, in one-letter code: Retinoblastoma-related protein 1 (1003 aa).

The domain A stretch occupies residues 405-607 (TPVSTAMTTA…EKGSSMYNSL (203 aa)). The tract at residues 405 to 860 (TPVSTAMTTA…NEMFIPSVKP (456 aa)) is pocket. The interval 608–729 (AVAKPSLAAE…PGGGGETCAE (122 aa)) is spacer. The tract at residues 730–860 (TAINVFFGKI…NEMFIPSVKP (131 aa)) is domain B. Residues 868–899 (AGNNSEKNDHNDGQGPASPKPSPFPKLPDMSP) form a disordered region.

This sequence belongs to the retinoblastoma protein (RB) family. Expressed in roots, stems, leaves and flowers.

It is found in the nucleus. Regulator of biological processes that recruits a histone deacetylase to control gene transcription. Formation of stable complexes with geminiviridae replication-associated proteins may create a cellular environment which favors viral DNA replication. May play a role in the entry into mitosis, negatively regulating the cell proliferation during leaf, stem, and flower development. Critical regulator of the endocycle. This chain is Retinoblastoma-related protein 1 (RBR1), found in Nicotiana benthamiana.